Consider the following 437-residue polypeptide: Glutamate-1-semialdehyde 2,1-aminomutase (437 aa).

N6-(pyridoxal phosphate)lysine is present on Lys-277.

Belongs to the class-III pyridoxal-phosphate-dependent aminotransferase family. HemL subfamily. Homodimer. It depends on pyridoxal 5'-phosphate as a cofactor.

The protein localises to the cytoplasm. It carries out the reaction (S)-4-amino-5-oxopentanoate = 5-aminolevulinate. It participates in porphyrin-containing compound metabolism; protoporphyrin-IX biosynthesis; 5-aminolevulinate from L-glutamyl-tRNA(Glu): step 2/2. The protein operates within porphyrin-containing compound metabolism; chlorophyll biosynthesis. The chain is Glutamate-1-semialdehyde 2,1-aminomutase from Thermosynechococcus vestitus (strain NIES-2133 / IAM M-273 / BP-1).